The following is a 547-amino-acid chain: Chaperonin GroEL (547 aa).

Residues 30-33, K51, 87-91, G415, and D496 contribute to the ATP site; these read TLGP and DGTTT.

This sequence belongs to the chaperonin (HSP60) family. In terms of assembly, forms a cylinder of 14 subunits composed of two heptameric rings stacked back-to-back. Interacts with the co-chaperonin GroES.

It is found in the cytoplasm. It carries out the reaction ATP + H2O + a folded polypeptide = ADP + phosphate + an unfolded polypeptide.. Its function is as follows. Together with its co-chaperonin GroES, plays an essential role in assisting protein folding. The GroEL-GroES system forms a nano-cage that allows encapsulation of the non-native substrate proteins and provides a physical environment optimized to promote and accelerate protein folding. This Pelodictyon phaeoclathratiforme (strain DSM 5477 / BU-1) protein is Chaperonin GroEL.